Reading from the N-terminus, the 429-residue chain is Ribosomal RNA small subunit methyltransferase B (429 aa).

Residues 254–260, aspartate 277, aspartate 303, and aspartate 322 contribute to the S-adenosyl-L-methionine site; that span reads CAAPGGK. The active-site Nucleophile is cysteine 375.

The protein belongs to the class I-like SAM-binding methyltransferase superfamily. RsmB/NOP family.

It is found in the cytoplasm. The catalysed reaction is cytidine(967) in 16S rRNA + S-adenosyl-L-methionine = 5-methylcytidine(967) in 16S rRNA + S-adenosyl-L-homocysteine + H(+). Specifically methylates the cytosine at position 967 (m5C967) of 16S rRNA. The sequence is that of Ribosomal RNA small subunit methyltransferase B from Serratia proteamaculans (strain 568).